The primary structure comprises 153 residues: 3-hydroxyacyl-[acyl-carrier-protein] dehydratase FabZ (153 aa).

H59 is a catalytic residue.

This sequence belongs to the thioester dehydratase family. FabZ subfamily.

It localises to the cytoplasm. The enzyme catalyses a (3R)-hydroxyacyl-[ACP] = a (2E)-enoyl-[ACP] + H2O. Functionally, involved in unsaturated fatty acids biosynthesis. Catalyzes the dehydration of short chain beta-hydroxyacyl-ACPs and long chain saturated and unsaturated beta-hydroxyacyl-ACPs. This Thermosynechococcus vestitus (strain NIES-2133 / IAM M-273 / BP-1) protein is 3-hydroxyacyl-[acyl-carrier-protein] dehydratase FabZ.